Here is a 424-residue protein sequence, read N- to C-terminus: DUF21 domain-containing protein At4g33700 (424 aa).

Over 1 to 11 the chain is Extracellular; sequence MAVEYVCCSPN. The CNNM transmembrane domain maps to 8–191; it reads CSPNFFIHIA…GKGGELTHDE (184 aa). Residues 12-32 traverse the membrane as a helical segment; that stretch reads FFIHIAVIVFLVLFAGLMSGL. Over 33–70 the chain is Cytoplasmic; sequence TLGLMSLSLVDLEVLAKSGTPEHRKYAAKILPVVKNQH. A helical transmembrane segment spans residues 71–91; that stretch reads LLLVTLLICNAAAMETLPIFL. Residues 92 to 94 lie on the Extracellular side of the membrane; that stretch reads DGL. The chain crosses the membrane as a helical span at residues 95 to 115; sequence VTAWGAILISVTLILLFGEII. Residues 116–136 lie on the Cytoplasmic side of the membrane; it reads PQSICSRYGLAIGATVAPFVR. The helical transmembrane segment at 137-157 threads the bilayer; it reads VLVFICLPVAWPISKLLDFLL. The Extracellular segment spans residues 158–424; sequence GHRRAALFRR…DETDHHFEDS (267 aa). The CBS 1 domain occupies 210-271; sequence MTPISDIFVI…TINPDEEIPV (62 aa). Asparagine 273 and asparagine 319 each carry an N-linked (GlcNAc...) asparagine glycan. 2 CBS domains span residues 275 to 331 and 355 to 416; these read TIRR…DVDS and PNRA…IFDE. Disordered stretches follow at residues 321 to 340 and 355 to 374; these read SVKEARVDVDSEGTPTPQER and PNRASSFKGGSKSKKWSKDN. Serine 331 bears the Phosphoserine mark.

It localises to the membrane. This chain is DUF21 domain-containing protein At4g33700 (CBSDUF6), found in Arabidopsis thaliana (Mouse-ear cress).